The primary structure comprises 307 residues: Cuticle collagen 36 (307 aa).

2 disordered regions span residues 76–102 (TRSR…GGPT) and 116–307 (QQGP…PPGY). Gly residues predominate over residues 86 to 102 (EGSGSGGSGSGGYGGPT). Triple-helical region regions lie at residues 89–105 (GSGG…TGAG), 118–150 (GPAG…EGSI), 167–187 (GPQG…KGKS), 194–226 (GKNG…PGRV), 231–257 (GAAG…AGLT), and 260–295 (GGQG…EGSC). Over residues 157–168 (PSEPCIICPPGP) the composition is skewed to pro residues. Residues 186–196 (KSQERAADGKN) show a composition bias toward basic and acidic residues. The span at 202–220 (IGPPGPPGGVGEPGPPGPA) shows a compositional bias: pro residues. Over residues 231–242 (GAAGPAGPRGVK) the composition is skewed to low complexity. Positions 258–278 (EIGGQGPPGDAGGPGPVGGQG) are enriched in gly residues. A compositionally biased stretch (pro residues) spans 279–288 (PPGPQGPQGP).

It belongs to the cuticular collagen family. As to quaternary structure, collagen polypeptide chains are complexed within the cuticle by disulfide bonds and other types of covalent cross-links.

Its function is as follows. Nematode cuticles are composed largely of collagen-like proteins. The cuticle functions both as an exoskeleton and as a barrier to protect the worm from its environment. The protein is Cuticle collagen 36 (col-36) of Caenorhabditis elegans.